The chain runs to 469 residues: 3-isopropylmalate dehydratase large subunit (469 aa).

The [4Fe-4S] cluster site is built by Cys-350, Cys-410, and Cys-413.

This sequence belongs to the aconitase/IPM isomerase family. LeuC type 1 subfamily. As to quaternary structure, heterodimer of LeuC and LeuD. Requires [4Fe-4S] cluster as cofactor.

The catalysed reaction is (2R,3S)-3-isopropylmalate = (2S)-2-isopropylmalate. The protein operates within amino-acid biosynthesis; L-leucine biosynthesis; L-leucine from 3-methyl-2-oxobutanoate: step 2/4. In terms of biological role, catalyzes the isomerization between 2-isopropylmalate and 3-isopropylmalate, via the formation of 2-isopropylmaleate. This chain is 3-isopropylmalate dehydratase large subunit, found in Rhodopseudomonas palustris (strain ATCC BAA-98 / CGA009).